The following is a 272-amino-acid chain: Putative pyruvate, phosphate dikinase regulatory protein (272 aa).

ADP is bound at residue 147 to 154; it reads GLSRTSKT.

This sequence belongs to the pyruvate, phosphate/water dikinase regulatory protein family. PDRP subfamily.

It catalyses the reaction N(tele)-phospho-L-histidyl/L-threonyl-[pyruvate, phosphate dikinase] + ADP = N(tele)-phospho-L-histidyl/O-phospho-L-threonyl-[pyruvate, phosphate dikinase] + AMP + H(+). The catalysed reaction is N(tele)-phospho-L-histidyl/O-phospho-L-threonyl-[pyruvate, phosphate dikinase] + phosphate + H(+) = N(tele)-phospho-L-histidyl/L-threonyl-[pyruvate, phosphate dikinase] + diphosphate. Bifunctional serine/threonine kinase and phosphorylase involved in the regulation of the pyruvate, phosphate dikinase (PPDK) by catalyzing its phosphorylation/dephosphorylation. In Clostridium botulinum (strain Alaska E43 / Type E3), this protein is Putative pyruvate, phosphate dikinase regulatory protein.